Here is a 438-residue protein sequence, read N- to C-terminus: Putative galacturan 1,4-alpha-galacturonidase A (438 aa).

Positions 1–21 (MRMPSAISIGVFAGLSLAASA) are cleaved as a signal peptide. N28, N102, N111, and N197 each carry an N-linked (GlcNAc...) asparagine glycan. PbH1 repeat units follow at residues 186 to 222 (SSHI…DTYR) and 223 to 244 (SDHI…AFKG). The Proton donor role is filled by D237. N-linked (GlcNAc...) asparagine glycosylation is found at N245, N253, N279, N325, N353, N372, and N388. PbH1 repeat units follow at residues 246–266 (STNI…AFGS), 277–303 (VENV…YFKS), and 323–344 (VRNV…YIDT). An intrachain disulfide couples C397 to C403. The N-linked (GlcNAc...) asparagine glycan is linked to N418.

It belongs to the glycosyl hydrolase 28 family.

It localises to the secreted. The catalysed reaction is [(1-&gt;4)-alpha-D-galacturonosyl](n) + H2O = alpha-D-galacturonate + [(1-&gt;4)-alpha-D-galacturonosyl](n-1). Specific in hydrolyzing the terminal glycosidic bond of polygalacturonic acid and oligogalacturonates. This is Putative galacturan 1,4-alpha-galacturonidase A (rgxA) from Aspergillus niger.